The sequence spans 87 residues: Small ribosomal subunit protein bS20 (87 aa).

It belongs to the bacterial ribosomal protein bS20 family.

Binds directly to 16S ribosomal RNA. The protein is Small ribosomal subunit protein bS20 of Shigella flexneri.